We begin with the raw amino-acid sequence, 701 residues long: Elongation factor G 1 (701 aa).

In terms of domain architecture, tr-type G spans 5–281 (SKYRNIGIFA…AVVDYLPSPT (277 aa)). GTP is bound by residues 14–21 (AHVDAGKT), 78–82 (DTPGH), and 132–135 (NKLD).

Belongs to the TRAFAC class translation factor GTPase superfamily. Classic translation factor GTPase family. EF-G/EF-2 subfamily.

It is found in the cytoplasm. Its function is as follows. Catalyzes the GTP-dependent ribosomal translocation step during translation elongation. During this step, the ribosome changes from the pre-translocational (PRE) to the post-translocational (POST) state as the newly formed A-site-bound peptidyl-tRNA and P-site-bound deacylated tRNA move to the P and E sites, respectively. Catalyzes the coordinated movement of the two tRNA molecules, the mRNA and conformational changes in the ribosome. The protein is Elongation factor G 1 of Colwellia psychrerythraea (strain 34H / ATCC BAA-681) (Vibrio psychroerythus).